The sequence spans 292 residues: ATP synthase gamma chain (292 aa).

It belongs to the ATPase gamma chain family. F-type ATPases have 2 components, CF(1) - the catalytic core - and CF(0) - the membrane proton channel. CF(1) has five subunits: alpha(3), beta(3), gamma(1), delta(1), epsilon(1). CF(0) has three main subunits: a, b and c.

Its subcellular location is the cell membrane. Its function is as follows. Produces ATP from ADP in the presence of a proton gradient across the membrane. The gamma chain is believed to be important in regulating ATPase activity and the flow of protons through the CF(0) complex. In Streptococcus thermophilus (strain CNRZ 1066), this protein is ATP synthase gamma chain.